The chain runs to 962 residues: Glycine dehydrogenase (decarboxylating) (962 aa).

Lys-709 is modified (N6-(pyridoxal phosphate)lysine).

The protein belongs to the GcvP family. As to quaternary structure, the glycine cleavage system is composed of four proteins: P, T, L and H. Pyridoxal 5'-phosphate is required as a cofactor.

The catalysed reaction is N(6)-[(R)-lipoyl]-L-lysyl-[glycine-cleavage complex H protein] + glycine + H(+) = N(6)-[(R)-S(8)-aminomethyldihydrolipoyl]-L-lysyl-[glycine-cleavage complex H protein] + CO2. In terms of biological role, the glycine cleavage system catalyzes the degradation of glycine. The P protein binds the alpha-amino group of glycine through its pyridoxal phosphate cofactor; CO(2) is released and the remaining methylamine moiety is then transferred to the lipoamide cofactor of the H protein. This chain is Glycine dehydrogenase (decarboxylating), found in Shewanella pealeana (strain ATCC 700345 / ANG-SQ1).